A 60-amino-acid polypeptide reads, in one-letter code: Large ribosomal subunit protein bL32 (60 aa).

The interval 1-60 (MAVQQNKKSPSKRGMHRSHDFLVNPATAIEPNTGETHLRHHISPNGFYRGRKVLKTKADE) is disordered. The segment covering 49–60 (RGRKVLKTKADE) has biased composition (basic residues).

Belongs to the bacterial ribosomal protein bL32 family.

In Bordetella bronchiseptica (strain ATCC BAA-588 / NCTC 13252 / RB50) (Alcaligenes bronchisepticus), this protein is Large ribosomal subunit protein bL32.